We begin with the raw amino-acid sequence, 426 residues long: 6-Hydroxy-7-prenyldeoxybrevianamide E synthase notC' (426 aa).

Glutamate 94 contacts substrate. Residues arginine 105, lysine 191, and tyrosine 193 each coordinate dimethylallyl diphosphate. Substrate is bound at residue tyrosine 195. 6 residues coordinate dimethylallyl diphosphate: lysine 267, tyrosine 269, glutamine 352, tyrosine 354, tyrosine 418, and tyrosine 422.

It belongs to the tryptophan dimethylallyltransferase family.

The catalysed reaction is 6-hydroxydeoxybrevianamide E + dimethylallyl diphosphate = notoamide S + diphosphate. It participates in alkaloid biosynthesis. In terms of biological role, prenyltransferase; part of the gene cluster that mediates the biosynthesis of notoamide, a fungal indole alkaloid that belongs to a family of natural products containing a characteristic bicyclo[2.2.2]diazaoctane core. The first step of notoamide biosynthesis involves coupling of L-proline and L-tryptophan by the bimodular NRPS notE', to produce cyclo-L-tryptophan-L-proline called brevianamide F. The reverse prenyltransferase notF' then acts as a deoxybrevianamide E synthase and converts brevianamide F to deoxybrevianamide E via reverse prenylation at C-2 of the indole ring leading to the bicyclo[2.2.2]diazaoctane core. Deoxybrevianamide E is further hydroxylated at C-6 of the indole ring, likely catalyzed by the cytochrome P450 monooxygenase notG', to yield 6-hydroxy-deoxybrevianamide E. 6-hydroxy-deoxybrevianamide E is a specific substrate of the prenyltransferase notC' for normal prenylation at C-7 to produce 6-hydroxy-7-prenyl-deoxybrevianamide, also called notoamide S. As the proposed pivotal branching point in notoamide biosynthesis, notoamide S can be diverted to notoamide E through an oxidative pyran ring closure putatively catalyzed by either notH' cytochrome P450 monooxygenase or the notD' FAD-linked oxidoreductase. This step would be followed by an indole 2,3-epoxidation-initiated pinacol-like rearrangement catalyzed by the notB' FAD-dependent monooxygenase leading to the formation of notoamide C and notoamide D. On the other hand notoamide S is converted to notoamide T by notH' (or notD'), a bifunctional oxidase that also functions as the intramolecular Diels-Alderase responsible for generation of (-)-notoamide T. To generate antipodal (+)-notoaminide T, notH (or notD) in Aspergillus strain MF297-2 is expected to catalyze a Diels-Alder reaction leading to the opposite stereochemistry. The remaining oxidoreductase notD' (or notH') likely catalyzes the oxidative pyran ring formation to yield (-)-stephacidin A. The FAD-dependent monooxygenase notI' is highly similar to notB' and is predicted to catalyze a similar conversion from (-)-stephacidin A to (+)-notoamide B via the 2,3-epoxidation of (-)-stephacidin A followed by a pinacol-type rearrangement. Finally, it remains unclear which enzyme could be responsible for the final hydroxylation steps leading to notoamide A and sclerotiamide. This chain is 6-Hydroxy-7-prenyldeoxybrevianamide E synthase notC', found in Aspergillus versicolor.